We begin with the raw amino-acid sequence, 146 residues long: D-aminoacyl-tRNA deacylase (146 aa).

The Gly-cisPro motif, important for rejection of L-amino acids signature appears at 138-139; it reads GP.

Belongs to the DTD family. Homodimer.

It localises to the cytoplasm. It catalyses the reaction glycyl-tRNA(Ala) + H2O = tRNA(Ala) + glycine + H(+). The enzyme catalyses a D-aminoacyl-tRNA + H2O = a tRNA + a D-alpha-amino acid + H(+). Its function is as follows. An aminoacyl-tRNA editing enzyme that deacylates mischarged D-aminoacyl-tRNAs. Also deacylates mischarged glycyl-tRNA(Ala), protecting cells against glycine mischarging by AlaRS. Acts via tRNA-based rather than protein-based catalysis; rejects L-amino acids rather than detecting D-amino acids in the active site. By recycling D-aminoacyl-tRNA to D-amino acids and free tRNA molecules, this enzyme counteracts the toxicity associated with the formation of D-aminoacyl-tRNA entities in vivo and helps enforce protein L-homochirality. In Xanthomonas campestris pv. campestris (strain 8004), this protein is D-aminoacyl-tRNA deacylase.